Consider the following 119-residue polypeptide: E3 ubiquitin-protein ligase PPP1R11 (119 aa).

Positions 1 to 42 (MAESSGPTAGGGATSSTVTTESDTQPEHRSLTLKLRKRKPDK) are disordered. Atypical RING finger domain stretches follow at residues 55–65 (NLGRRSSKCCC) and 87–96 (CESAHCIRGH). A disordered region spans residues 96–119 (HKKATSGSKETPSSHHDKTGSMQH). The span at 107–119 (PSSHHDKTGSMQH) shows a compositional bias: basic and acidic residues.

The enzyme catalyses S-ubiquitinyl-[E2 ubiquitin-conjugating enzyme]-L-cysteine + [acceptor protein]-L-lysine = [E2 ubiquitin-conjugating enzyme]-L-cysteine + N(6)-ubiquitinyl-[acceptor protein]-L-lysine.. Its pathway is protein modification; protein ubiquitination. Functionally, atypical E3 ubiquitin-protein ligase which ubiquitinates TLR2 at 'Lys-754' leading to its degradation by the proteasome. Inhibitor of protein phosphatase 1. This is E3 ubiquitin-protein ligase PPP1R11 (ppp1r11) from Xenopus tropicalis (Western clawed frog).